We begin with the raw amino-acid sequence, 150 residues long: Developmental pluripotency-associated protein 3 (150 aa).

Residues 1–22 (MEEPSEKVDPMKDPETPQKKDE) show a composition bias toward basic and acidic residues. The tract at residues 1-32 (MEEPSEKVDPMKDPETPQKKDEEDALDDTDVL) is disordered. Positions 1 to 75 (MEEPSEKVDP…VPVENKSEKI (75 aa)) are required for H3K9me2-binding. Positions 76–150 (RREVQSAFPK…PSENAKIGKN (75 aa)) are required to exclude TET3 from the maternal pronucleus.

As to expression, expressed in the immature oocytes and in newborn ovaries. Subsequently detected in maturing oocytes and in preimplantation embryos. Expressed in pluripotent embryonic but not in differentiated somatic cells. Expressed in blastocysts, epiblasts, primordial germ cells, embryonic gonads and primitive spermatogonia. No expression is detected in adult testes.

Its subcellular location is the nucleus. The protein localises to the cytoplasm. Functionally, primordial germ cell (PGCs)-specific protein involved in epigenetic chromatin reprogramming in the zygote following fertilization. In zygotes, DNA demethylation occurs selectively in the paternal pronucleus before the first cell division, while the adjacent maternal pronucleus and certain paternally-imprinted loci are protected from this process. Participates in protection of DNA methylation in the maternal pronucleus by preventing conversion of 5mC to 5hmC: specifically recognizes and binds histone H3 dimethylated at 'Lys-9' (H3K9me2) on maternal genome, and protects maternal genome from TET3-mediated conversion to 5hmC and subsequent DNA demethylation. Does not bind paternal chromatin, which is mainly packed into protamine and does not contain much H3K9me2 mark. Also protects imprinted loci that are marked with H3K9me2 in mature sperm from DNA demethylation in early embryogenesis. May be important for the totipotent/pluripotent states continuing through preimplantation development. Also involved in chromatin condensation in oocytogenesis. The sequence is that of Developmental pluripotency-associated protein 3 (Dppa3) from Mus musculus (Mouse).